The chain runs to 403 residues: ESX-5 secretion system protein EccE5 (403 aa).

2 helical membrane-spanning segments follow: residues 9 to 29 and 43 to 63; these read LALS…ILIV and IAWW…VVTY.

This sequence belongs to the EccE family. As to quaternary structure, part of the ESX-5 / type VII secretion system (T7SS), which is composed of cytosolic and membrane components. The ESX-5 membrane complex is composed of EccB5, EccC5, EccD5 and EccE5.

The protein resides in the cell inner membrane. Functionally, part of the ESX-5 specialized secretion system, which is responsible for the secretion of EsxN and a number of PE_PGRS and PPE proteins. The chain is ESX-5 secretion system protein EccE5 from Mycobacterium marinum (strain ATCC BAA-535 / M).